The following is an 815-amino-acid chain: BTB/POZ domain-containing protein KCTD3 (815 aa).

Residues 18–87 (EIVQLNVGGT…LRTKELDLRG (70 aa)) form the BTB domain. Over residues 139-168 (INNTVRSADSRNGLNSTEGEARGNGTQPVL) the composition is skewed to polar residues. Residues 139 to 170 (INNTVRSADSRNGLNSTEGEARGNGTQPVLSG) form a disordered region. WD repeat units follow at residues 174 to 218 (ETVR…GWQQ), 224 to 263 (YLDW…LWSV), 270 to 305 (SEIG…VWNA), 310 to 342 (WQVQ…YIDM), 354 to 404 (LLVT…VQHP), 412 to 449 (QLFQ…TWTV), 457 to 504 (STQP…IQKV), and 510 to 569 (KLFV…MWDL). Positions 512 to 815 (FVRLSSTGKR…SDSSGQEYSL (304 aa)) are interaction with HCN3. 3 positions are modified to phosphoserine: serine 604, serine 664, and serine 711. A compositionally biased stretch (basic and acidic residues) spans 736–758 (SESKKRSSEDENENKIEFRKKGG). Residues 736 to 815 (SESKKRSSED…SDSSGQEYSL (80 aa)) are disordered. Residues 774–800 (ASSPSTSDGGTDSPGTASPSPTKTTPS) show a composition bias toward low complexity. Serine 793 is modified (phosphoserine).

It belongs to the KCTD3 family. As to quaternary structure, interacts with HCN3. Broadly expressed in normal tissues.

It localises to the cell membrane. Its function is as follows. Accessory subunit of potassium/sodium hyperpolarization-activated cyclic nucleotide-gated channel 3 (HCN3) up-regulating its cell-surface expression and current density without affecting its voltage dependence and kinetics. In Homo sapiens (Human), this protein is BTB/POZ domain-containing protein KCTD3 (KCTD3).